The following is a 384-amino-acid chain: Geranylgeranyl pyrophosphate synthase (384 aa).

2 disordered regions span residues 1–25 (MVPN…TSST) and 39–78 (RPVP…PARY). Over residues 47–62 (LGQNNTRNRSSSTTAI) the composition is skewed to polar residues. Isopentenyl diphosphate-binding residues include Lys-112, Arg-115, and His-144. The Mg(2+) site is built by Asp-151 and Asp-155. Arg-160 is a dimethylallyl diphosphate binding site. Arg-161 contacts isopentenyl diphosphate. Residues Lys-238, Thr-239, and Gln-272 each coordinate dimethylallyl diphosphate. Asp-275 contributes to the Mg(2+) binding site. Dimethylallyl diphosphate is bound by residues Asn-279, Lys-289, and Lys-299.

It belongs to the FPP/GGPP synthase family. Mg(2+) is required as a cofactor.

The catalysed reaction is isopentenyl diphosphate + dimethylallyl diphosphate = (2E)-geranyl diphosphate + diphosphate. It catalyses the reaction isopentenyl diphosphate + (2E)-geranyl diphosphate = (2E,6E)-farnesyl diphosphate + diphosphate. It carries out the reaction isopentenyl diphosphate + (2E,6E)-farnesyl diphosphate = (2E,6E,10E)-geranylgeranyl diphosphate + diphosphate. Its pathway is secondary metabolite biosynthesis. Catalyzes the trans-addition of the 3 molecules of isopentenyl diphosphate (IPP) onto dimethylallyl diphosphate (DMAPP) to form geranylgeranyl pyrophosphate (GGPP). GGPP is a precursor for the biosynthesis of many secondary metabolites, including the indole diterpenes nodulisporic acids (NA). The chain is Geranylgeranyl pyrophosphate synthase from Hypoxylon pulicicidum.